The sequence spans 856 residues: DNA mismatch repair protein MutS (856 aa).

600-607 (GPNMSGKS) lines the ATP pocket.

It belongs to the DNA mismatch repair MutS family.

In terms of biological role, this protein is involved in the repair of mismatches in DNA. It is possible that it carries out the mismatch recognition step. This protein has a weak ATPase activity. The sequence is that of DNA mismatch repair protein MutS from Lactobacillus acidophilus (strain ATCC 700396 / NCK56 / N2 / NCFM).